The chain runs to 444 residues: S-locus-specific glycoprotein BS29-1 (444 aa).

The first 28 residues, 1–28 (MRGVIPNYHHSYTLLFFVILVLFPHVFS), serve as a signal peptide directing secretion. A Bulb-type lectin domain is found at 31–159 (TLSPNEALTI…KTTALDRFMW (129 aa)). 5 N-linked (GlcNAc...) asparagine glycosylation sites follow: Asn-43, Asn-125, Asn-180, Asn-243, and Asn-396. Positions 356 to 437 (CGEGDGFLRM…GGQDLYLKVA (82 aa)) constitute a PAN domain. Cystine bridges form between Cys-387/Cys-412 and Cys-395/Cys-397.

Stigma.

Its function is as follows. Involved in sporophytic self-incompatibility system (the inability of flowering plants to achieve self-fertilization). This Brassica oleracea var. alboglabra (Chinese kale) protein is S-locus-specific glycoprotein BS29-1 (SLSG).